Consider the following 117-residue polypeptide: Large ribosomal subunit protein bL20c (117 aa).

This sequence belongs to the bacterial ribosomal protein bL20 family.

Its subcellular location is the plastid. It is found in the chloroplast. In terms of biological role, binds directly to 23S ribosomal RNA and is necessary for the in vitro assembly process of the 50S ribosomal subunit. It is not involved in the protein synthesizing functions of that subunit. The polypeptide is Large ribosomal subunit protein bL20c (Morus indica (Mulberry)).